The following is a 1131-amino-acid chain: Protein DWARF 53 (1131 aa).

The region spanning 8–181 is the Clp R domain; the sequence is ARQCLSPAAV…KLAILRPAPP (174 aa). Repeat regions lie at residues 12 to 85 and 103 to 181; these read LSPA…LDRL and VSNS…PAPP. The interval 511 to 574 is disordered; the sequence is NRDPYKPFPR…ISSPSVTNKR (64 aa). Over residues 558–569 the composition is skewed to low complexity; that stretch reads SSSTARPISSPS. The short motif at 578–582 is the EAR 1 element; the sequence is LVLNL. The tract at residues 588-655 is disordered; sequence KSDENLQERG…KRVEDSERSV (68 aa). Residues 597–609 show a composition bias toward polar residues; it reads GMQSQHGTLSNVD. Over residues 646 to 655 the composition is skewed to basic and acidic residues; it reads KRVEDSERSV. The short motif at 799-803 is the EAR 2 element; it reads LDLNL. Disordered regions lie at residues 951–970 and 976–1002; these read ISDD…RLHR and FDLN…NSYG. The short motif at 976–981 is the EAR 3 element; the sequence is FDLNLP. A compositionally biased stretch (acidic residues) spans 982–993; that stretch reads VDEDEPLDADDD.

This sequence belongs to the ClpA/ClpB family. In terms of assembly, interacts with D3. Interacts with D14. The interaction with D14 is enhanced in the presence of strigolactones. The interaction with D14 occurs in the presence of (2'R) stereoisomers of strigolactones, but not (2'S) stereoisomers. Interacts with the TOPLESS-related proteins TPR1, TPR2 and TPR3. Interacts with SPL14/IPA1. Post-translationally, polyubiquitinated. Strigolactone, but not karrikin, triggers rapid SCF(D3)-dependent degradation via the proteasome. In terms of tissue distribution, expressed in the shoot bases of seedlings, young leaves, axillary buds and young panicles. Expressed in young roots vasculature, culms, internodes and nodes, preferentially in the parenchyma cells surrounding the xylem.

The protein localises to the nucleus. Repressor of strigolactones (SL) signaling. Subjected to a negative feedback control of SL signaling. Suppresses the transcriptional activation activity of SPL14/IPA1 in SL signaling. Acts with SPL14/IPA1 to mediate the SL-regulated tiller development. Subject to a negative feedback regulation by SPL14/IPA1, which binds to D53 promoter to repress D53 gene expression. The polypeptide is Protein DWARF 53 (Oryza sativa subsp. japonica (Rice)).